The primary structure comprises 217 residues: Peptide methionine sulfoxide reductase MsrA (217 aa).

The disordered stretch occupies residues 16 to 39 (EALKGGRHPVLESPQPHTVLGTPI). Cys56 is a catalytic residue.

Belongs to the MsrA Met sulfoxide reductase family.

It carries out the reaction L-methionyl-[protein] + [thioredoxin]-disulfide + H2O = L-methionyl-(S)-S-oxide-[protein] + [thioredoxin]-dithiol. The enzyme catalyses [thioredoxin]-disulfide + L-methionine + H2O = L-methionine (S)-S-oxide + [thioredoxin]-dithiol. Has an important function as a repair enzyme for proteins that have been inactivated by oxidation. Catalyzes the reversible oxidation-reduction of methionine sulfoxide in proteins to methionine. The polypeptide is Peptide methionine sulfoxide reductase MsrA (Corynebacterium efficiens (strain DSM 44549 / YS-314 / AJ 12310 / JCM 11189 / NBRC 100395)).